A 167-amino-acid polypeptide reads, in one-letter code: Phosphopantetheine adenylyltransferase (167 aa).

Position 10 (Thr-10) interacts with substrate. ATP-binding positions include Thr-10–Phe-11 and His-18. 3 residues coordinate substrate: Lys-42, Leu-75, and Arg-89. ATP is bound by residues Gly-90–Arg-92, Glu-100, and Tyr-125–Ser-131.

Belongs to the bacterial CoaD family. In terms of assembly, homohexamer. Mg(2+) is required as a cofactor.

The protein resides in the cytoplasm. The catalysed reaction is (R)-4'-phosphopantetheine + ATP + H(+) = 3'-dephospho-CoA + diphosphate. Its pathway is cofactor biosynthesis; coenzyme A biosynthesis; CoA from (R)-pantothenate: step 4/5. Reversibly transfers an adenylyl group from ATP to 4'-phosphopantetheine, yielding dephospho-CoA (dPCoA) and pyrophosphate. The polypeptide is Phosphopantetheine adenylyltransferase (Chlorobium phaeobacteroides (strain DSM 266 / SMG 266 / 2430)).